The sequence spans 423 residues: Acyl-coenzyme A diphosphatase FITM2 (423 aa).

A disordered region spans residues 1–47 (MATKRRPLRPNLGGTAGSPSSSGSNMNFRPGGPDITRSEARGTRPTA). Residues 1 to 75 (MATKRRPLRP…KTIFFNTDLK (75 aa)) are Cytoplasmic-facing. Residues 76-96 (VALYLGSLFVISVIGDFVPFP) form a helical membrane-spanning segment. At 97 to 113 (KTYFARSDNLFNQYFVK) the chain is on the lumenal side. A helical transmembrane segment spans residues 114–134 (IGWGWTLLFVVPFLVLSAYTI). Residues 135–146 (TCGDHKRMLRHH) lie on the Cytoplasmic side of the membrane. Residues 147-167 (FPRIVIATFFWFFWTKLFNVV) traverse the membrane as a helical segment. Over 168-191 (ENSYGRCTTKGYATKSSCLKAGHL) the chain is Lumenal. Residues 192 to 212 (WKGFDISGHAFILIHSSLVLI) form a helical membrane-spanning segment. His200 is a catalytic residue. Residues 213-270 (EEARPIIRWETIKEHIRNERHNRSTAENSGTNPLRTLNEEQMRSLQFLYKRLTPIIRT) lie on the Cytoplasmic side of the membrane. The chain crosses the membrane as a helical span at residues 271–291 (LFIGMAALQLLWDIMLVGTML). The Lumenal portion of the chain corresponds to 292–299 (YYHRMIEK). Residue His294 is part of the active site. The helical transmembrane segment at 300–320 (VISGIIAILTWYFTYRFWYPT) threads the bilayer. Residues 321–423 (PGLLPEAPGN…RDREQQTLES (103 aa)) are Cytoplasmic-facing. Disordered regions lie at residues 344–381 (FKRP…PRDQ) and 400–423 (AAAN…TLES). A compositionally biased stretch (low complexity) spans 351-367 (STGAATTSSGSNSSRTN). Over residues 409–423 (QQKRERDREQQTLES) the composition is skewed to basic and acidic residues.

Belongs to the FIT family. FIT2 subfamily.

It is found in the endoplasmic reticulum membrane. It carries out the reaction an acyl-CoA + H2O = an acyl-4'-phosphopantetheine + adenosine 3',5'-bisphosphate + 2 H(+). Fatty acyl-coenzyme A (CoA) diphosphatase that hydrolyzes fatty acyl-CoA to yield acyl-4'-phosphopantetheine and adenosine 3',5'-bisphosphate. Preferentially hydrolyzes unsaturated long-chain acyl-CoA substrates in the endoplasmic reticulum (ER) lumen. This catalytic activity is required for maintaining ER structure and for lipid droplets (LDs) biogenesis, which are lipid storage organelles involved in maintaining lipid and energy homeostasis. May directly bind to diacylglycerol (DAGs) and triacylglycerol, which is also important for LD biogenesis. May support directional budding of nacent LDs from the ER into the cytosol by reducing DAG levels at sites of LD formation. Plays a role in the regulation of cell morphology and cytoskeletal organization. Required for correct morphology of nociceptive multi-dendritic sensory neurons. Required for normal mechanical amplification in hearing. The protein is Acyl-coenzyme A diphosphatase FITM2 of Drosophila melanogaster (Fruit fly).